The following is a 544-amino-acid chain: Membrane protein insertase YidC (544 aa).

5 helical membrane passes run 6-26 (NILL…WQTD), 345-365 (LLMF…LITL), 423-443 (GGCL…WVLL), 460-480 (LSVQ…MFVM), and 503-523 (VVFT…WLVG).

It belongs to the OXA1/ALB3/YidC family. Type 1 subfamily. As to quaternary structure, interacts with the Sec translocase complex via SecD. Specifically interacts with transmembrane segments of nascent integral membrane proteins during membrane integration.

The protein resides in the cell inner membrane. Its function is as follows. Required for the insertion and/or proper folding and/or complex formation of integral membrane proteins into the membrane. Involved in integration of membrane proteins that insert both dependently and independently of the Sec translocase complex, as well as at least some lipoproteins. Aids folding of multispanning membrane proteins. In Shewanella woodyi (strain ATCC 51908 / MS32), this protein is Membrane protein insertase YidC.